The sequence spans 585 residues: Protein FAM151A (585 aa).

A helical transmembrane segment spans residues 14–34 (WVFAGITCVSVVVIAAIVLAI).

Belongs to the menorin family.

The protein resides in the membrane. In Homo sapiens (Human), this protein is Protein FAM151A (FAM151A).